The sequence spans 742 residues: Polyribonucleotide nucleotidyltransferase (742 aa).

Mg(2+) is bound by residues Asp515 and Asp521. One can recognise a KH domain in the interval 581-640 (PRIITITIPVDKIGEVIGPKGKIINQIQDDTGASISIEDDGTIYIGATNGEAAEAAKNAV). The S1 motif domain maps to 652–724 (GERYLGTVVK…DRGKLSLVPV (73 aa)).

It belongs to the polyribonucleotide nucleotidyltransferase family. Requires Mg(2+) as cofactor.

It localises to the cytoplasm. It carries out the reaction RNA(n+1) + phosphate = RNA(n) + a ribonucleoside 5'-diphosphate. In terms of biological role, involved in mRNA degradation. Catalyzes the phosphorolysis of single-stranded polyribonucleotides processively in the 3'- to 5'-direction. The chain is Polyribonucleotide nucleotidyltransferase from Nocardioides sp. (strain ATCC BAA-499 / JS614).